The following is a 158-amino-acid chain: Phosphopantetheine adenylyltransferase (158 aa).

Ser9 serves as a coordination point for substrate. ATP contacts are provided by residues 9 to 10 (SF) and His17. Residues Lys41, Val73, and Lys87 each coordinate substrate. ATP is bound by residues 88-90 (GLR), Glu98, and 122-128 (YSFVSSS).

This sequence belongs to the bacterial CoaD family. In terms of assembly, homohexamer. Mg(2+) serves as cofactor.

It is found in the cytoplasm. It carries out the reaction (R)-4'-phosphopantetheine + ATP + H(+) = 3'-dephospho-CoA + diphosphate. Its pathway is cofactor biosynthesis; coenzyme A biosynthesis; CoA from (R)-pantothenate: step 4/5. In terms of biological role, reversibly transfers an adenylyl group from ATP to 4'-phosphopantetheine, yielding dephospho-CoA (dPCoA) and pyrophosphate. This chain is Phosphopantetheine adenylyltransferase, found in Mycolicibacterium smegmatis (strain ATCC 700084 / mc(2)155) (Mycobacterium smegmatis).